A 190-amino-acid chain; its full sequence is Endoribonuclease YbeY (190 aa).

The segment at 1-25 (MSQPRPGHRPDCNGADPDSNFASMT) is disordered. The Zn(2+) site is built by His147, His151, and His157.

Belongs to the endoribonuclease YbeY family. Zn(2+) serves as cofactor.

The protein localises to the cytoplasm. Single strand-specific metallo-endoribonuclease involved in late-stage 70S ribosome quality control and in maturation of the 3' terminus of the 16S rRNA. The chain is Endoribonuclease YbeY from Rhodopseudomonas palustris (strain ATCC BAA-98 / CGA009).